The sequence spans 622 residues: Chaperone protein HscA homolog (622 aa).

This sequence belongs to the heat shock protein 70 family.

Chaperone involved in the maturation of iron-sulfur cluster-containing proteins. Has a low intrinsic ATPase activity which is markedly stimulated by HscB. This Delftia acidovorans (strain DSM 14801 / SPH-1) protein is Chaperone protein HscA homolog.